We begin with the raw amino-acid sequence, 293 residues long: MPSIEFDDSKPSWADQVEEEGDEGSLPSPKETVKGNIKTVTEYKIDDDGQKFKIIRTFKIETRKASKAVARRKNWKKFGNSEYDAPGPNVATTTVSDDVFMTFISSKEDLNAQDQDEDPMNKLKGQKIVSCRICKGDHWTTRCPYKDTLGPMQKELAEQLGLSTGEKEKAAEPEPAQPVQNKTGKYVPPSLRDGGTRRGESMQPNRRADDNATIRVTNLSEDTRETDLQELFRPFGSISRIYLAKDKNTGQSKGFAFISFHRREDAARAIAGVSGFGYDHLILNVEWAKPSNN.

2 disordered regions span residues 1–32 (MPSI…PKET) and 163–206 (STGE…QPNR). The segment covering 194–206 (GGTRRGESMQPNR) has biased composition (basic and acidic residues). The 79-residue stretch at 212–290 (ATIRVTNLSE…LILNVEWAKP (79 aa)) folds into the RRM domain.

This sequence belongs to the eIF-3 subunit G family. Component of the eukaryotic translation initiation factor 3 (eIF-3) complex, which is composed of 13 subunits: eif3a, eif3b, eif3c, eif3d, eif3e, eif3f, eif3g, eif3h, eif3i, eif3j, eif3k, eif3l and eif3m.

Its subcellular location is the cytoplasm. Its function is as follows. RNA-binding component of the eukaryotic translation initiation factor 3 (eIF-3) complex, which is involved in protein synthesis of a specialized repertoire of mRNAs and, together with other initiation factors, stimulates binding of mRNA and methionyl-tRNAi to the 40S ribosome. The eIF-3 complex specifically targets and initiates translation of a subset of mRNAs involved in cell proliferation. This subunit can bind 18S rRNA. The protein is Eukaryotic translation initiation factor 3 subunit G (eif3g) of Danio rerio (Zebrafish).